The sequence spans 278 residues: HTH-type transcriptional activator RhaS (278 aa).

The HTH araC/xylS-type domain occupies 174 to 272 (NLLLAWLEDH…NWSPRDIRQG (99 aa)). 2 DNA-binding regions (H-T-H motif) span residues 191 to 212 (DAVADQFSLSLRTLHRQLKQQT) and 239 to 262 (VTDIAYRCGFSDSNHFSTLFRREF).

Binds DNA as a dimer.

The protein localises to the cytoplasm. Activates expression of the rhaBAD and rhaT operons. In Shigella flexneri serotype 5b (strain 8401), this protein is HTH-type transcriptional activator RhaS.